Reading from the N-terminus, the 1017-residue chain is Voltage-gated delayed rectifier potassium channel KCNH4 (1017 aa).

Residues Met1–Ile228 are Cytoplasmic-facing. Residues Phe14 to His90 enclose the PAS domain. The PAC domain maps to His93–Gly145. The disordered stretch occupies residues Ser138–Gly157. Residues Pro139–Gly148 are compositionally biased toward gly residues. The helical transmembrane segment at Trp229–Cys249 threads the bilayer. At Phe250–Thr259 the chain is on the extracellular side. The helical transmembrane segment at Ser260 to Leu280 threads the bilayer. Topologically, residues Asn281–Leu302 are cytoplasmic. A helical transmembrane segment spans residues His303–Tyr323. Over Ile324 to Leu332 the chain is Extracellular. Asn326 carries an N-linked (GlcNAc...) asparagine glycan. The chain crosses the membrane as a helical; Voltage-sensor span at residues Val333–Arg353. Residues Tyr354–Val361 are Cytoplasmic-facing. A helical transmembrane segment spans residues Leu362 to Val382. Residues Ile383–Ile427 are Extracellular-facing. Asn414 carries an N-linked (GlcNAc...) asparagine glycan. Positions Ala428–Asn448 form an intramembrane region, pore-forming. The Selectivity filter motif lies at Ser439 to Asn444. The Extracellular portion of the chain corresponds to Thr449–Tyr482. N-linked (GlcNAc...) asparagine glycosylation is present at Asn473. The helical transmembrane segment at Ser483–Arg503 threads the bilayer. Topologically, residues Leu504–His1017 are cytoplasmic. Residues Leu556 to Gly620 form a cNMP-binding domain region. Residues Gly691–Ser724 show a composition bias toward polar residues. 4 disordered regions span residues Gly691–Leu749, Leu772–Ala803, Pro821–Glu875, and Leu971–His1017. The span at Leu772–Ala787 shows a compositional bias: low complexity. Pro residues predominate over residues Ile978–Pro1002. The span at Ser1008–His1017 shows a compositional bias: polar residues.

The protein belongs to the potassium channel family. H (Eag) (TC 1.A.1.20) subfamily. Kv12.3/KCNH4 sub-subfamily. As to quaternary structure, the potassium channel is probably composed of a homo- or heterotetrameric complex of pore-forming alpha subunits that can associate with modulating beta subunits. As to expression, detected only in brain, in particular in the telencephalon. Detected in putamen and caudate nucleus, and at lower levels in cerebral cortex, occipital and hippocampus.

The protein localises to the membrane. The catalysed reaction is K(+)(in) = K(+)(out). Pore-forming (alpha) subunit of a voltage-gated delayed rectifier. Activates at more negative voltages, exhibits fast prepulse-independent activation kinetics and deactivates much more slowly, but shows no inactivation. This is Voltage-gated delayed rectifier potassium channel KCNH4 from Homo sapiens (Human).